A 715-amino-acid polypeptide reads, in one-letter code: Lactococcin-A transport/processing ATP-binding protein LcnC (715 aa).

Residues 11–138 form the Peptidase C39 domain; that stretch reads QVDEMDCGCA…SEWTGISLFL (128 aa). C17 is an active-site residue. The next 6 membrane-spanning stretches (helical) occupy residues 167–187, 197–217, 237–257, 282–302, 307–327, and 396–416; these read VILN…LGSY, IPNA…LTYI, LAID…MSFF, TILS…ILGL, LFLL…IFTP, and AIIQ…LVIS. Positions 168–450 constitute an ABC transmembrane type-1 domain; it reads ILNIVIASFI…IINLQTKLQK (283 aa). The region spanning 482–715 is the ABC transporter domain; the sequence is LNMSDISYQY…NGFYEQLYHN (234 aa). 515–522 contributes to the ATP binding site; sequence GMSGSGKS.

The protein belongs to the ABC transporter superfamily. Bacteriocin (lactococcin) exporter (TC 3.A.1.112.3) family.

The protein resides in the cell membrane. Involved in the export process of the bacteriocin lactococcin A. The protein is Lactococcin-A transport/processing ATP-binding protein LcnC (lcnC) of Lactococcus lactis subsp. lactis (Streptococcus lactis).